The chain runs to 205 residues: Phosphoribosyl-dephospho-CoA transferase (205 aa).

Residues Asp-134 and Asp-136 contribute to the active site.

Belongs to the MdcG family.

It catalyses the reaction apo-[malonate decarboxylase ACP] + 2'-(5''-triphospho-alpha-D-ribosyl)-3'-dephospho-CoA = holo-[malonate decarboxylase ACP] + diphosphate. In terms of biological role, transfers 2'-(5-triphosphoribosyl)-3'-dephosphocoenzyme-A to the apo-[acyl-carrier-protein] of the malonate decarboxylase to yield holo-[acyl-carrier-protein]. The protein is Phosphoribosyl-dephospho-CoA transferase of Klebsiella pneumoniae subsp. pneumoniae (strain ATCC 700721 / MGH 78578).